We begin with the raw amino-acid sequence, 370 residues long: Asporin (370 aa).

A signal peptide spans 1–15; it reads MKVYVLLVFLTLCSA. Ser-45 carries O-linked (GalNAc...) serine glycosylation. An LRRNT domain is found at 56–92; that stretch reads FFPFDLFSTCPFGCQCYSRVVHCSDLGLSSVPSNIPF. 2 cysteine pairs are disulfide-bonded: Cys-65/Cys-71 and Cys-69/Cys-78. 11 LRR repeats span residues 93–114, 117–138, 141–163, 164–183, 186–209, 232–253, 256–277, 280–302, 303–324, 332–354, and 355–370; these read DTRM…DFKG, SLYA…AFLT, KLRR…PKSL, AELR…TFKG, ALHV…AFEG, TLLE…DFKR, DLQR…SLAN, RVRE…QELK, YLQI…DFCP, SLYS…PATF, and RCVL…NFRK. Asn-272 is a glycosylation site (N-linked (GlcNAc...) asparagine). Residues Cys-323 and Cys-356 are joined by a disulfide bond.

The protein belongs to the small leucine-rich proteoglycan (SLRP) family. SLRP class I subfamily.

The protein localises to the secreted. It localises to the extracellular space. The protein resides in the extracellular matrix. In Bos taurus (Bovine), this protein is Asporin (ASPN).